Here is a 334-residue protein sequence, read N- to C-terminus: Formamidase (334 aa).

One can recognise a CN hydrolase domain in the interval Phe14–Pro260. The Proton acceptor role is filled by Glu60. The active-site Proton donor is the Lys133. The active-site Nucleophile is the Cys166.

The protein belongs to the carbon-nitrogen hydrolase superfamily. Aliphatic amidase family.

The enzyme catalyses formamide + H2O = formate + NH4(+). Its function is as follows. Is an aliphatic amidase with a restricted substrate specificity, as it only hydrolyzes formamide. The polypeptide is Formamidase (Helicobacter pylori (strain J99 / ATCC 700824) (Campylobacter pylori J99)).